The primary structure comprises 62 residues: Large ribosomal subunit protein bL32 (62 aa).

A compositionally biased stretch (basic residues) spans 1 to 18; that stretch reads MGVPKKRTSKMRRDRRRA. The interval 1 to 22 is disordered; it reads MGVPKKRTSKMRRDRRRAANNN.

This sequence belongs to the bacterial ribosomal protein bL32 family.

In Myxococcus xanthus (strain DK1622), this protein is Large ribosomal subunit protein bL32.